We begin with the raw amino-acid sequence, 102 residues long: MQQARVRLAGTSPDDLDDICDDVRDIADTTGVNLSGPIPLPTKTLEIPTRKSPDGEGTATWEHWEMRVHKRLIDIDADERALRQLMRIQVPNDVSIEIVLED.

A disordered region spans residues 30 to 58 (TGVNLSGPIPLPTKTLEIPTRKSPDGEGT).

It belongs to the universal ribosomal protein uS10 family. In terms of assembly, part of the 30S ribosomal subunit.

In terms of biological role, involved in the binding of tRNA to the ribosomes. The chain is Small ribosomal subunit protein uS10 from Haloquadratum walsbyi (strain DSM 16790 / HBSQ001).